The chain runs to 55 residues: ATP synthase F(0) complex subunit 8 (55 aa).

Residues 7–24 (NPWFFIMLLSWLTFSLII) traverse the membrane as a helical segment. Residues 35–55 (NPPSNKTTTHTKTTPWTWPWT) are disordered. Residues 37-55 (PSNKTTTHTKTTPWTWPWT) show a composition bias toward low complexity.

The protein belongs to the ATPase protein 8 family. In terms of assembly, component of the ATP synthase complex composed at least of ATP5F1A/subunit alpha, ATP5F1B/subunit beta, ATP5MC1/subunit c (homooctomer), MT-ATP6/subunit a, MT-ATP8/subunit 8, ATP5ME/subunit e, ATP5MF/subunit f, ATP5MG/subunit g, ATP5MK/subunit k, ATP5MJ/subunit j, ATP5F1C/subunit gamma, ATP5F1D/subunit delta, ATP5F1E/subunit epsilon, ATP5PF/subunit F6, ATP5PB/subunit b, ATP5PD/subunit d, ATP5PO/subunit OSCP. ATP synthase complex consists of a soluble F(1) head domain (subunits alpha(3) and beta(3)) - the catalytic core - and a membrane F(0) domain - the membrane proton channel (subunits c, a, 8, e, f, g, k and j). These two domains are linked by a central stalk (subunits gamma, delta, and epsilon) rotating inside the F1 region and a stationary peripheral stalk (subunits F6, b, d, and OSCP).

It is found in the mitochondrion membrane. Functionally, subunit 8, of the mitochondrial membrane ATP synthase complex (F(1)F(0) ATP synthase or Complex V) that produces ATP from ADP in the presence of a proton gradient across the membrane which is generated by electron transport complexes of the respiratory chain. ATP synthase complex consist of a soluble F(1) head domain - the catalytic core - and a membrane F(1) domain - the membrane proton channel. These two domains are linked by a central stalk rotating inside the F(1) region and a stationary peripheral stalk. During catalysis, ATP synthesis in the catalytic domain of F(1) is coupled via a rotary mechanism of the central stalk subunits to proton translocation. In vivo, can only synthesize ATP although its ATP hydrolase activity can be activated artificially in vitro. Part of the complex F(0) domain. The chain is ATP synthase F(0) complex subunit 8 from Chaetura pelagica (Chimney swift).